The sequence spans 483 residues: FAD-linked oxidoreductase easE (483 aa).

The region spanning 10 to 193 (QGRLPLYSAV…TEATVRVFSD (184 aa)) is the FAD-binding PCMH-type domain.

It belongs to the oxygen-dependent FAD-linked oxidoreductase family. It depends on FAD as a cofactor.

It participates in alkaloid biosynthesis; ergot alkaloid biosynthesis. Its function is as follows. FAD-linked oxidoreductase; part of the gene cluster that mediates the biosynthesis of fungal ergot alkaloid. DmaW catalyzes the first step of ergot alkaloid biosynthesis by condensing dimethylallyl diphosphate (DMAP) and tryptophan to form 4-dimethylallyl-L-tryptophan. The second step is catalyzed by the methyltransferase easF that methylates 4-dimethylallyl-L-tryptophan in the presence of S-adenosyl-L-methionine, resulting in the formation of 4-dimethylallyl-L-abrine. The catalase easC and the FAD-dependent oxidoreductase easE then transform 4-dimethylallyl-L-abrine to chanoclavine-I which is further oxidized by easD in the presence of NAD(+), resulting in the formation of chanoclavine-I aldehyde. Agroclavine dehydrogenase easG then mediates the conversion of chanoclavine-I aldehyde to agroclavine via a non-enzymatic adduct reaction: the substrate is an iminium intermediate that is formed spontaneously from chanoclavine-I aldehyde in the presence of glutathione. The presence of easA is not required to complete this reaction. Further conversion of agroclavine to paspalic acid is a two-step process involving oxidation of agroclavine to elymoclavine and of elymoclavine to paspalic acid, the second step being performed by the elymoclavine oxidase cloA. Paspalic acid is then further converted to D-lysergic acid. Ergopeptines are assembled from D-lysergic acid and three different amino acids by the D-lysergyl-peptide-synthetases composed each of a monomudular and a trimodular nonribosomal peptide synthetase subunit. LpsB and lpsC encode the monomodular subunits responsible for D-lysergic acid activation and incorporation into the ergopeptine backbone. LpsA1 and A2 subunits encode the trimodular nonribosomal peptide synthetase assembling the tripeptide portion of ergopeptines. LpsA1 is responsible for formation of the major ergopeptine, ergotamine, and lpsA2 for alpha-ergocryptine, the minor ergopeptine of the total alkaloid mixture elaborated by C.purpurea. D-lysergyl-tripeptides are assembled by the nonribosomal peptide synthetases and released as N-(D-lysergyl-aminoacyl)-lactams. Cyclolization of the D-lysergyl-tripeptides is performed by the Fe(2+)/2-ketoglutarate-dependent dioxygenase easH which introduces a hydroxyl group into N-(D-lysergyl-aminoacyl)-lactam at alpha-C of the aminoacyl residue followed by spontaneous condensation with the terminal lactam carbonyl group. This Claviceps purpurea (Ergot fungus) protein is FAD-linked oxidoreductase easE.